The primary structure comprises 238 residues: Uridylate kinase (238 aa).

An ATP-binding site is contributed by 12–15; it reads KLSG. Residue G54 coordinates UMP. 2 residues coordinate ATP: G55 and R59. UMP contacts are provided by residues D74 and 135-142; that span reads TGNPFFTT. Positions 162, 168, and 171 each coordinate ATP.

It belongs to the UMP kinase family. Homohexamer.

It localises to the cytoplasm. The catalysed reaction is UMP + ATP = UDP + ADP. Its pathway is pyrimidine metabolism; CTP biosynthesis via de novo pathway; UDP from UMP (UMPK route): step 1/1. With respect to regulation, inhibited by UTP. In terms of biological role, catalyzes the reversible phosphorylation of UMP to UDP. This chain is Uridylate kinase, found in Aromatoleum aromaticum (strain DSM 19018 / LMG 30748 / EbN1) (Azoarcus sp. (strain EbN1)).